The primary structure comprises 367 residues: Heme A synthase (367 aa).

Helical transmembrane passes span 25–45 (ALRFWLGFVLLALFCLVLVGG), 111–131 (LIARGIGVIFALPLLYFWLTG), 139–159 (WPLVGILALGGLQGFIGWWMV), 174–194 (LATHLVMACLIFAGCMWIMRG), and 210–230 (GFAATIAIFALFQIYLGALVA). Histidine 274 contributes to the heme binding site. 3 helical membrane passes run 276 to 296 (IGAYTLFALTLINMVIALRAA), 305 to 325 (AVVLFSLVTLQAAIGIATLLM), and 327 to 347 (VPLHWGLLHQAGALVVFGFAI). A heme-binding site is contributed by histidine 335.

This sequence belongs to the COX15/CtaA family. Type 2 subfamily. Interacts with CtaB. Heme b serves as cofactor.

It is found in the cell membrane. The enzyme catalyses Fe(II)-heme o + 2 A + H2O = Fe(II)-heme a + 2 AH2. The protein operates within porphyrin-containing compound metabolism; heme A biosynthesis; heme A from heme O: step 1/1. Functionally, catalyzes the conversion of heme O to heme A by two successive hydroxylations of the methyl group at C8. The first hydroxylation forms heme I, the second hydroxylation results in an unstable dihydroxymethyl group, which spontaneously dehydrates, resulting in the formyl group of heme A. This is Heme A synthase from Rhizobium leguminosarum bv. trifolii (strain WSM2304).